The sequence spans 487 residues: Fatty acid desaturase 2-like protein FADS2B (487 aa).

Residues 1 to 11 show a composition bias toward basic and acidic residues; sequence MKLEEKLEHNE. A disordered region spans residues 1–20; sequence MKLEEKLEHNESLVGKSRPC. Residues 1-175 lie on the Cytoplasmic side of the membrane; the sequence is MKLEEKLEHN…AMNMFSANLR (175 aa). Residues 62 to 139 form the Cytochrome b5 heme-binding domain; the sequence is LNLYTWQEIQ…LKPLLIGELS (78 aa). Residues histidine 97 and histidine 120 each contribute to the heme site. The helical transmembrane segment at 176 to 196 threads the bilayer; that stretch reads FFFLHLAQILILEISAWLILH. Topologically, residues 197–201 are lumenal; sequence HFGSS. The helical transmembrane segment at 202–222 threads the bilayer; it reads WLVTILISFLLTVSQAQCSFL. The Cytoplasmic portion of the chain corresponds to 223–307; sequence QHDLGHLSMF…IKYIDYEKQH (85 aa). Residues 224-228 carry the Histidine box-1 motif; that stretch reads HDLGH. The Histidine box-2 motif lies at 261–265; it reads HFQHH. A helical transmembrane segment spans residues 308–328; that stretch reads LYFYMVALPFLMPVYFNLQSM. Residues 329–349 lie on the Lumenal side of the membrane; that stretch reads QVMYLRKYWMDIAWVSSFYIR. A helical transmembrane segment spans residues 350 to 370; that stretch reads YFITFGPFYGIFGTVLLIYLV. At 371–487 the chain is on the cytoplasmic side; the sequence is KFIESPWIAY…ASLWMNAYYE (117 aa). Residues 426-430 carry the Histidine box-3 motif; that stretch reads QIEHH.

This sequence belongs to the fatty acid desaturase type 1 family.

Its subcellular location is the endoplasmic reticulum membrane. It participates in lipid metabolism; polyunsaturated fatty acid biosynthesis. The protein is Fatty acid desaturase 2-like protein FADS2B of Mus musculus (Mouse).